We begin with the raw amino-acid sequence, 204 residues long: MDRVVLMLSVLSLGVSSQPITDGQRLFSIAVSRVQHLHLLAQRLFSDFESSLQTEEQRQLNKIFLQDFCNSDYIISPIDKHETQRSSVLKLLSISYRLVESWEFPSRSLAGGSAPRNQISPKLSELKTGIHLLIRANEDGAELFPDSSALQLAPYGDYYHSPGTDESLRRTYELLACFKKDMHKVETYLTVAKCRLSPEANCTL.

The N-terminal stretch at 1 to 17 (MDRVVLMLSVLSLGVSS) is a signal peptide. Gln18 carries the post-translational modification Pyrrolidone carboxylic acid. His36 lines the Zn(2+) pocket. A disulfide bridge links Cys69 with Cys177. Glu186 serves as a coordination point for Zn(2+). Residues Cys194 and Cys202 are joined by a disulfide bond.

Belongs to the somatotropin/prolactin family.

It localises to the secreted. Growth hormone plays an important role in growth control and is involved in the regulation of several anabolic processes. Implicated as an osmoregulatory substance important for seawater adaptation. The polypeptide is Somatotropin (gh) (Acanthopagrus butcheri (Australian black bream)).